We begin with the raw amino-acid sequence, 199 residues long: Twist-related protein 1 (199 aa).

A compositionally biased stretch (low complexity) spans 1–18 (MMQDVSSSPVSPADDSLS). The segment at 1-102 (MMQDVSSSPV…GGGSPQSYEE (102 aa)) is disordered. The segment covering 34-43 (RGGRKRRSSR) has biased composition (basic residues). Gly residues-rich tracts occupy residues 46–65 (AGGGAGPGGAAGGGVGGGDE) and 80–96 (GCGGGAGGGGSSSGGGS). The region spanning 105-156 (TQRVMANVRERQRTQSLNEAFAALRKIIPTLPSDKLSKIQTLKLAARYIDFL) is the bHLH domain. The sufficient for transactivation activity stretch occupies residues 158 to 188 (QVLQSDELDSKMASCSYVAHERLSYAFSVWR).

As to quaternary structure, efficient DNA binding requires dimerization with another bHLH protein. Homodimer or heterodimer with E proteins such as TCF3. ID1 binds preferentially to TCF3 but does not interact efficiently with TWIST1 so ID1 levels control the amount of TCF3 available to dimerize with TWIST and thus determine the type of dimer formed.

The protein localises to the nucleus. Its function is as follows. Acts as a transcriptional regulator. Inhibits myogenesis by sequestrating E proteins, inhibiting trans-activation by MEF2, and inhibiting DNA-binding by MYOD1 through physical interaction. This interaction probably involves the basic domains of both proteins. Also represses expression of pro-inflammatory cytokines such as TNFA and IL1B. Regulates cranial suture patterning and fusion. Activates transcription as a heterodimer with E proteins. Regulates gene expression differentially, depending on dimer composition. Homodimers induce expression of FGFR2 and POSTN while heterodimers repress FGFR2 and POSTN expression and induce THBS1 expression. Heterodimerization is also required for osteoblast differentiation. Represses the activity of the circadian transcriptional activator: NPAS2-BMAL1 heterodimer. The polypeptide is Twist-related protein 1 (TWIST1) (Microcebus murinus (Gray mouse lemur)).